We begin with the raw amino-acid sequence, 439 residues long: tRNA-2-methylthio-N(6)-dimethylallyladenosine synthase (439 aa).

An MTTase N-terminal domain is found at 2–119 (KYIYIKTWGC…LAQMIDKVEK (118 aa)). Residues cysteine 11, cysteine 48, cysteine 82, cysteine 156, cysteine 160, and cysteine 163 each coordinate [4Fe-4S] cluster. Residues 142–374 (KKTGYTASIS…QNCINKQTMS (233 aa)) form the Radical SAM core domain. In terms of domain architecture, TRAM spans 377 to 439 (RKMLKSTQSV…HTHSLQGELI (63 aa)).

It belongs to the methylthiotransferase family. MiaB subfamily. As to quaternary structure, monomer. [4Fe-4S] cluster serves as cofactor.

The protein resides in the cytoplasm. It catalyses the reaction N(6)-dimethylallyladenosine(37) in tRNA + (sulfur carrier)-SH + AH2 + 2 S-adenosyl-L-methionine = 2-methylsulfanyl-N(6)-dimethylallyladenosine(37) in tRNA + (sulfur carrier)-H + 5'-deoxyadenosine + L-methionine + A + S-adenosyl-L-homocysteine + 2 H(+). Its function is as follows. Catalyzes the methylthiolation of N6-(dimethylallyl)adenosine (i(6)A), leading to the formation of 2-methylthio-N6-(dimethylallyl)adenosine (ms(2)i(6)A) at position 37 in tRNAs that read codons beginning with uridine. The chain is tRNA-2-methylthio-N(6)-dimethylallyladenosine synthase from Buchnera aphidicola subsp. Schizaphis graminum (strain Sg).